Here is a 1709-residue protein sequence, read N- to C-terminus: Intraflagellar transport protein 122 (1709 aa).

WD repeat units follow at residues 51–89 (TQHPLVTCLAISPDGHMVVSMGTDGAVMFNDSTGAALFK) and 132–171 (SFKGTPRAIAWAPGSDWFVISTQDGDLVIMTPEGMELNSC). The disordered stretch occupies residues 209–229 (TIPQTVTPSASASGRSGSGKR). A WD 3 repeat occupies 634–673 (LHRSPIVSLDISPDRKYISVVDRSDVVSVYKFLDDSEIVL). One copy of the LRR 1 repeat lies at 1231 to 1256 (IEALERLRLSGNTSKEAIIIKQLIDA). The segment at 1378–1404 (LSGEDTVKASSQRSKKDNPPSLRSTIG) is disordered. The stretch at 1414–1436 (LGSLAHIDLGINNMNIPPGISEL) is one LRR 2 repeat.

Its subcellular location is the cell projection. It localises to the cilium. It is found in the flagellum. The protein resides in the cytoplasm. The protein localises to the cytoskeleton. Its subcellular location is the flagellum axoneme. It localises to the flagellum basal body. Component of the intraflagellar transport complex A (IFT-A) involved in flagellar assembly. The sequence is that of Intraflagellar transport protein 122 from Giardia intestinalis (strain ATCC 50803 / WB clone C6) (Giardia lamblia).